A 968-amino-acid polypeptide reads, in one-letter code: Dynein axonemal intermediate chain 3 (968 aa).

Basic and acidic residues predominate over residues 1–33 (MKDTSSKRPKSKEANKKKTKDKSNADNLPKPEE). Disordered regions lie at residues 1–39 (MKDT…ASEP) and 136–166 (KPPA…PEPQ). Residues 141-157 (GADEQMEDEEQQEEEEE) show a composition bias toward acidic residues. WD repeat units lie at residues 407–447 (ECPD…DRLQ), 480–536 (GHKA…VMVH), and 712–753 (VYSK…RQPS). A coiled-coil region spans residues 830-857 (LHTHTDQLRVLEERVREAKQNLLAVSDR). The span at 897 to 919 (KRQSDHQKKKKETEAEQQKKKTE) shows a compositional bias: basic and acidic residues. The tract at residues 897–930 (KRQSDHQKKKKETEAEQQKKKTELVTPPKQEEEV) is disordered.

Part of the multisubunit axonemal dynein complex formed at least of two heavy chains and a number of intermediate and light chains.

The protein resides in the cytoplasm. Functionally, may be involved in the regulation of cilia function. In Danio rerio (Zebrafish), this protein is Dynein axonemal intermediate chain 3 (dnai3).